A 77-amino-acid polypeptide reads, in one-letter code: Small ribosomal subunit protein bS16c (77 aa).

It belongs to the bacterial ribosomal protein bS16 family.

The protein resides in the plastid. Its subcellular location is the cyanelle. This chain is Small ribosomal subunit protein bS16c, found in Cyanophora paradoxa.